An 88-amino-acid polypeptide reads, in one-letter code: MSKILLLLIRFYQYFISPLLGNNCRFHPTCSEYAKESITLYGSLKGLWRAFKRIIKCQPFYNGTVLYDTEVRCHARKSGNPVKNKEPK.

The protein belongs to the UPF0161 family.

It localises to the cell inner membrane. Could be involved in insertion of integral membrane proteins into the membrane. This chain is Putative membrane protein insertion efficiency factor, found in Rickettsia canadensis (strain McKiel).